Reading from the N-terminus, the 89-residue chain is Small ribosomal subunit protein uS15 (89 aa).

A compositionally biased stretch (basic and acidic residues) spans 1 to 10; that stretch reads MSITAERKAE. The tract at residues 1–24 is disordered; the sequence is MSITAERKAEVIQGNANKAGDTGS.

This sequence belongs to the universal ribosomal protein uS15 family. As to quaternary structure, part of the 30S ribosomal subunit. Forms a bridge to the 50S subunit in the 70S ribosome, contacting the 23S rRNA.

Its function is as follows. One of the primary rRNA binding proteins, it binds directly to 16S rRNA where it helps nucleate assembly of the platform of the 30S subunit by binding and bridging several RNA helices of the 16S rRNA. Functionally, forms an intersubunit bridge (bridge B4) with the 23S rRNA of the 50S subunit in the ribosome. The protein is Small ribosomal subunit protein uS15 of Rhodopseudomonas palustris (strain HaA2).